The following is a 465-amino-acid chain: tRNA-2-methylthio-N(6)-dimethylallyladenosine synthase (465 aa).

One can recognise an MTTase N-terminal domain in the interval 5 to 125 (RKLHIKSYGC…LPELLKRAGN (121 aa)). 6 residues coordinate [4Fe-4S] cluster: C14, C50, C88, C166, C170, and C173. Residues 152-384 (RARGISAFVT…QELIDSQQSA (233 aa)) form the Radical SAM core domain. Residues 387-449 (KAAIGSTVDV…RYSFLGELVT (63 aa)) form the TRAM domain.

Belongs to the methylthiotransferase family. MiaB subfamily. In terms of assembly, monomer. [4Fe-4S] cluster serves as cofactor.

It localises to the cytoplasm. The catalysed reaction is N(6)-dimethylallyladenosine(37) in tRNA + (sulfur carrier)-SH + AH2 + 2 S-adenosyl-L-methionine = 2-methylsulfanyl-N(6)-dimethylallyladenosine(37) in tRNA + (sulfur carrier)-H + 5'-deoxyadenosine + L-methionine + A + S-adenosyl-L-homocysteine + 2 H(+). In terms of biological role, catalyzes the methylthiolation of N6-(dimethylallyl)adenosine (i(6)A), leading to the formation of 2-methylthio-N6-(dimethylallyl)adenosine (ms(2)i(6)A) at position 37 in tRNAs that read codons beginning with uridine. In Bradyrhizobium diazoefficiens (strain JCM 10833 / BCRC 13528 / IAM 13628 / NBRC 14792 / USDA 110), this protein is tRNA-2-methylthio-N(6)-dimethylallyladenosine synthase.